The primary structure comprises 35 residues: U14-ctenitoxin-Pn1a (35 aa).

3 disulfides stabilise this stretch: cysteine 3/cysteine 17, cysteine 10/cysteine 22, and cysteine 16/cysteine 32.

In terms of tissue distribution, expressed by the venom gland.

The protein localises to the secreted. Its function is as follows. Neurotoxin. This is U14-ctenitoxin-Pn1a from Phoneutria nigriventer (Brazilian armed spider).